The chain runs to 247 residues: Geranylgeranylglyceryl phosphate synthase (247 aa).

The Mg(2+) site is built by D23 and S52. Sn-glycerol 1-phosphate is bound by residues Y171–G177, G203–G204, and G225–T226.

Belongs to the GGGP/HepGP synthase family. Group II subfamily. Mg(2+) is required as a cofactor.

It is found in the cytoplasm. It carries out the reaction sn-glycerol 1-phosphate + (2E,6E,10E)-geranylgeranyl diphosphate = sn-3-O-(geranylgeranyl)glycerol 1-phosphate + diphosphate. The protein operates within membrane lipid metabolism; glycerophospholipid metabolism. Functionally, prenyltransferase that catalyzes the transfer of the geranylgeranyl moiety of geranylgeranyl diphosphate (GGPP) to the C3 hydroxyl of sn-glycerol-1-phosphate (G1P). This reaction is the first ether-bond-formation step in the biosynthesis of archaeal membrane lipids. In Methanosarcina acetivorans (strain ATCC 35395 / DSM 2834 / JCM 12185 / C2A), this protein is Geranylgeranylglyceryl phosphate synthase.